Here is a 109-residue protein sequence, read N- to C-terminus: Large ribosomal subunit protein uL22 (109 aa).

It belongs to the universal ribosomal protein uL22 family. Part of the 50S ribosomal subunit.

In terms of biological role, this protein binds specifically to 23S rRNA; its binding is stimulated by other ribosomal proteins, e.g. L4, L17, and L20. It is important during the early stages of 50S assembly. It makes multiple contacts with different domains of the 23S rRNA in the assembled 50S subunit and ribosome. Functionally, the globular domain of the protein is located near the polypeptide exit tunnel on the outside of the subunit, while an extended beta-hairpin is found that lines the wall of the exit tunnel in the center of the 70S ribosome. This is Large ribosomal subunit protein uL22 from Methylobacillus flagellatus (strain ATCC 51484 / DSM 6875 / VKM B-1610 / KT).